The sequence spans 168 residues: Gremlin-2 (168 aa).

An N-terminal signal peptide occupies residues Met-1 to Thr-21. Asn-40 carries N-linked (GlcNAc...) asparagine glycosylation. 4 cysteine pairs are disulfide-bonded: Cys-73–Cys-123, Cys-87–Cys-137, Cys-97–Cys-155, and Cys-101–Cys-157. A CTCK domain is found at Cys-73–Ser-163. N-linked (GlcNAc...) asparagine glycosylation occurs at Asn-161.

This sequence belongs to the DAN family. As to quaternary structure, homodimer. Interacts with BMP2, BMP4 and BMP7, but has lower affinity for BMP7 than for BMP2 and BMP4. Binds heparin; this impairs the interaction with BMP2. In terms of processing, N-glycosylated. As to expression, highly expressed in the ovary, followed by brain, spleen, colon, kidney and uterus. In ovary expressed in granulosa cells of selective early antral follicles.

The protein resides in the secreted. In terms of biological role, cytokine that inhibits the activity of BMP2 and BMP4 in a dose-dependent manner, and thereby modulates signaling by BMP family members. Contributes to the regulation of embryonic morphogenesis via BMP family members. Antagonizes BMP4-induced suppression of progesterone production in granulosa cells. The chain is Gremlin-2 (Grem2) from Mus musculus (Mouse).